Here is a 565-residue protein sequence, read N- to C-terminus: MTKSVDDLARGDQAGDEQDPVHREQQTFGDNPLEVRDTDHYMHEYVGGFVDKWDDLIDWKKRYESEGSFFIDQLRARGVETVLDAAAGTGFHSVRLLEEGFETVSADGSPQMLAKAFSNGLAYNGHILRVVNADWRWLNRDVHGEYDAIICLGNSFTHLFSERDRRKTLAEFYAMLKHDGVLIIDQRNYDSILDTGFSSKHTYYYAGEDVSAEPDHIDDGLARFKYTFPDKSEFFLNMYPLRKDYMRRLMREVGFQRIDTYGDFQETYGEDEPDFYIHVAEKSYRTEDEFVDMYSNAVHTARDYYNSEDADNFYYHVWGGNDIHVGLYQTPQEDIATASERTVQRMAGKVDISPETRILDLGAGYGGAARYLARTYGCHVTCLNLSEVENQRNREITRAEGLEHLIEVTDGSFEDLPYQDNAFDVVWSQDSFLHSGDRSRVMEEVTRVLKPKGSVLFTDPMASDSAKKNELGPILDRLHLDSLGSPGFYRKELTRLGLQNIEFEDLSEYLPVHYGRVLEVLESRENELAGFIGEEYRAHMKTGLRNWVQAGNGGSLAWGIIHARA.

Residues 1–10 (MTKSVDDLAR) show a composition bias toward basic and acidic residues. Positions 1–34 (MTKSVDDLARGDQAGDEQDPVHREQQTFGDNPLE) are disordered. Residues Tyr45, Trp53, Arg62, Ala86, Asp107, 134–135 (DW), and Leu152 each bind S-adenosyl-L-methionine. Substrate-binding residues include Asn154, Arg187, and Tyr226.

The protein belongs to the class I-like SAM-binding methyltransferase superfamily. Glycine N-methyltransferase family. As to quaternary structure, monomer.

The enzyme catalyses glycine + 2 S-adenosyl-L-methionine = N,N-dimethylglycine + 2 S-adenosyl-L-homocysteine + 2 H(+). The catalysed reaction is sarcosine + 2 S-adenosyl-L-methionine = glycine betaine + 2 S-adenosyl-L-homocysteine + 2 H(+). It carries out the reaction glycine + S-adenosyl-L-methionine = sarcosine + S-adenosyl-L-homocysteine + H(+). It catalyses the reaction sarcosine + S-adenosyl-L-methionine = N,N-dimethylglycine + S-adenosyl-L-homocysteine + H(+). The enzyme catalyses N,N-dimethylglycine + S-adenosyl-L-methionine = glycine betaine + S-adenosyl-L-homocysteine + H(+). It functions in the pathway amine and polyamine biosynthesis; betaine biosynthesis via glycine pathway; betaine from glycine: step 1/3. The protein operates within amine and polyamine biosynthesis; betaine biosynthesis via glycine pathway; betaine from glycine: step 2/3. Its pathway is amine and polyamine biosynthesis; betaine biosynthesis via glycine pathway; betaine from glycine: step 3/3. Catalyzes the methylation of glycine, sarcosine and dimethylglycine to sarcosine, dimethylglycine and betaine, respectively, with S-adenosylmethionine (AdoMet) acting as the methyl donor. Shows low level of activity on glycine when expressed in E.coli. The polypeptide is Glycine/sarcosine/dimethylglycine N-methyltransferase (Actinopolyspora halophila).